A 78-amino-acid polypeptide reads, in one-letter code: uncharacterized protein (78 aa).

This is an uncharacterized protein from Escherichia coli (strain K12).